Consider the following 464-residue polypeptide: Trigger factor (464 aa).

One can recognise a PPIase FKBP-type domain in the interval 162-243; it reads GDFISIDLSA…VGTVKERELP (82 aa). Residues 435–464 are disordered; that stretch reads ELFGNGEAETEEAASTDEAASDSTESEDQK.

This sequence belongs to the FKBP-type PPIase family. Tig subfamily.

The protein resides in the cytoplasm. It catalyses the reaction [protein]-peptidylproline (omega=180) = [protein]-peptidylproline (omega=0). In terms of biological role, involved in protein export. Acts as a chaperone by maintaining the newly synthesized protein in an open conformation. Functions as a peptidyl-prolyl cis-trans isomerase. The protein is Trigger factor of Rhodococcus jostii (strain RHA1).